Consider the following 216-residue polypeptide: UPF0598 protein C8orf82 (216 aa).

Belongs to the UPF0598 family.

The protein is UPF0598 protein C8orf82 (C8orf82) of Homo sapiens (Human).